The primary structure comprises 561 residues: Embryonal Fyn-associated substrate (561 aa).

Positions 5-68 constitute an SH3 domain; that stretch reads TSTQLARALY…PANRVKLLPA (64 aa). Disordered regions lie at residues 68 to 123, 171 to 215, 240 to 372, and 390 to 422; these read AGPA…CPPS, HPLT…PGPP, LADG…HNEY, and DKAQ…ALSP. Pro residues predominate over residues 103–123; that stretch reads VPPPARPCPTSGPPAGPCPPS. A Phosphotyrosine; by SRC modification is found at Y253. 2 short sequence motifs (SH3-binding) span residues 305–311 and 335–341; these read RPLPALP and RPLPPPP. The segment covering 308–325 has biased composition (pro residues); that stretch reads PALPVPEAPSPSPVPSPA. The span at 352–372 shows a compositional bias: basic and acidic residues; the sequence is VEGDPEGREMEDDPAGHHNEY. The divergent helix-loop-helix motif stretch occupies residues 438–488; the sequence is FYAGQCQSHYSALQAAVAALMSSTQANQPPRLFVPHSKRVVVAAHRLVFVG.

Belongs to the CAS family. Post-translationally, phosphorylated on multiple tyrosine residues. Phosphorylated on tyrosines by FYN and SRC. As to expression, the protein has been detected in lung and placenta.

Docking protein which plays a central coordinating role for tyrosine-kinase-based signaling related to cell adhesion. May serve as an activator of SRC and a downstream effector. Interacts with the SH3 domain of FYN and with CRK, SRC, and YES. This chain is Embryonal Fyn-associated substrate (EFS), found in Homo sapiens (Human).